Consider the following 106-residue polypeptide: Large ribosomal subunit protein uL24 (106 aa).

This sequence belongs to the universal ribosomal protein uL24 family. In terms of assembly, part of the 50S ribosomal subunit.

In terms of biological role, one of two assembly initiator proteins, it binds directly to the 5'-end of the 23S rRNA, where it nucleates assembly of the 50S subunit. Its function is as follows. One of the proteins that surrounds the polypeptide exit tunnel on the outside of the subunit. The protein is Large ribosomal subunit protein uL24 of Thermosipho africanus (strain TCF52B).